We begin with the raw amino-acid sequence, 236 residues long: Orotidine 5'-phosphate decarboxylase (236 aa).

Residues Asp14, Lys36, 63 to 72 (DLKFHDIPNT), Thr123, Arg184, Gln193, Gly213, and Arg214 contribute to the substrate site. The active-site Proton donor is the Lys65.

This sequence belongs to the OMP decarboxylase family. Type 1 subfamily. In terms of assembly, homodimer.

It catalyses the reaction orotidine 5'-phosphate + H(+) = UMP + CO2. It participates in pyrimidine metabolism; UMP biosynthesis via de novo pathway; UMP from orotate: step 2/2. Catalyzes the decarboxylation of orotidine 5'-monophosphate (OMP) to uridine 5'-monophosphate (UMP). The chain is Orotidine 5'-phosphate decarboxylase from Marinobacter nauticus (strain ATCC 700491 / DSM 11845 / VT8) (Marinobacter aquaeolei).